An 855-amino-acid polypeptide reads, in one-letter code: Axonemal dynein light chain domain-containing protein 1 (855 aa).

Polar residues predominate over residues 1–17; the sequence is MSLPKTPSTPLNSASTS. The tract at residues 1-31 is disordered; sequence MSLPKTPSTPLNSASTSESKKLVSVATEGTR. Coiled-coil stretches lie at residues 316 to 402, 451 to 480, and 571 to 596; these read QRIL…WSSA, LQKLTQKWRNLVNKFKQEVEEMEESTRETL, and SERQYMEEIIKNIQKLYKEYEIRING.

It localises to the cytoplasm. Functionally, may be essential for spermiogenesis and male fertility probably by regulating the manchette dynamics, spermatid head shaping and sperm flagellum assembly. This is Axonemal dynein light chain domain-containing protein 1 (AXDND1) from Macaca fascicularis (Crab-eating macaque).